Here is a 337-residue protein sequence, read N- to C-terminus: MSILVTGGAGYIGSHTVLSLLQRGDDVVILDNLSNASRESINRVEKLTGKTATFFEGDLLDRSCLRSVFSAHRISAVIHFAGLKAVGASTRKPLEYYQNNVTGTLVLLEEMRSAGVNQFIFSSSATVYGADAPVPYVETTPIGGTTSPYGTSKLMVEQILRDYAKANPEFKTIALRYFNPVGAHESGQMGEDPNGIPNNLLPYIAQVAIGRLEKLGIFGDDYPTEDGTGVRDYIHVMDLAEGHLKALDHLSAIEGYKAYNLGAGKGYSVLEMVKAFEKASGGTVAYQISPRRDGDLAAFWADATLADKELNWRVSRGIDEMMRDTWNWQSQNPQGDS.

Residues Y11–I12, D31–A36, D58–L59, F80–K84, N99, S124, Y149, K153, and F178 contribute to the NAD(+) site. Residues S124 and Y149 each contribute to the substrate site. Y149 (proton acceptor) is an active-site residue. Substrate-binding positions include N179, N199 to L200, G216 to F218, R231, and R292 to D295.

The protein belongs to the NAD(P)-dependent epimerase/dehydratase family. In terms of assembly, homodimer. It depends on NAD(+) as a cofactor.

The catalysed reaction is UDP-alpha-D-glucose = UDP-alpha-D-galactose. Its pathway is carbohydrate metabolism; galactose metabolism. Involved in the metabolism of galactose. Catalyzes the conversion of UDP-galactose (UDP-Gal) to UDP-glucose (UDP-Glc) through a mechanism involving the transient reduction of NAD. This is UDP-glucose 4-epimerase (galE) from Erwinia amylovora (Fire blight bacteria).